Consider the following 908-residue polypeptide: Isoleucine--tRNA ligase (908 aa).

Positions 59–69 (PYANGDLHIGH) match the 'HIGH' region motif. Position 554 (E554) interacts with L-isoleucyl-5'-AMP. The short motif at 595–599 (KMSKS) is the 'KMSKS' region element. K598 lines the ATP pocket. Positions 882, 885, 898, and 901 each coordinate Zn(2+).

The protein belongs to the class-I aminoacyl-tRNA synthetase family. IleS type 1 subfamily. As to quaternary structure, monomer. It depends on Zn(2+) as a cofactor.

The protein resides in the cytoplasm. The catalysed reaction is tRNA(Ile) + L-isoleucine + ATP = L-isoleucyl-tRNA(Ile) + AMP + diphosphate. Its function is as follows. Catalyzes the attachment of isoleucine to tRNA(Ile). As IleRS can inadvertently accommodate and process structurally similar amino acids such as valine, to avoid such errors it has two additional distinct tRNA(Ile)-dependent editing activities. One activity is designated as 'pretransfer' editing and involves the hydrolysis of activated Val-AMP. The other activity is designated 'posttransfer' editing and involves deacylation of mischarged Val-tRNA(Ile). This chain is Isoleucine--tRNA ligase, found in Mesoplasma florum (strain ATCC 33453 / NBRC 100688 / NCTC 11704 / L1) (Acholeplasma florum).